We begin with the raw amino-acid sequence, 501 residues long: Acetyl-coenzyme A carboxylase carboxyl transferase subunit beta, chloroplastic (501 aa).

The CoA carboxyltransferase N-terminal domain maps to L231–S501. C235, C238, C254, and C257 together coordinate Zn(2+). Residues C235–C257 form a C4-type zinc finger.

This sequence belongs to the AccD/PCCB family. Acetyl-CoA carboxylase is a heterohexamer composed of biotin carboxyl carrier protein, biotin carboxylase and 2 subunits each of ACCase subunit alpha and ACCase plastid-coded subunit beta (accD). Requires Zn(2+) as cofactor.

The protein localises to the plastid. It is found in the chloroplast stroma. It carries out the reaction N(6)-carboxybiotinyl-L-lysyl-[protein] + acetyl-CoA = N(6)-biotinyl-L-lysyl-[protein] + malonyl-CoA. Its pathway is lipid metabolism; malonyl-CoA biosynthesis; malonyl-CoA from acetyl-CoA: step 1/1. Component of the acetyl coenzyme A carboxylase (ACC) complex. Biotin carboxylase (BC) catalyzes the carboxylation of biotin on its carrier protein (BCCP) and then the CO(2) group is transferred by the transcarboxylase to acetyl-CoA to form malonyl-CoA. This is Acetyl-coenzyme A carboxylase carboxyl transferase subunit beta, chloroplastic from Lotus japonicus (Lotus corniculatus var. japonicus).